A 382-amino-acid chain; its full sequence is Sphingoid long-chain base transporter RSB1 (382 aa).

The Extracellular portion of the chain corresponds to 1-34 (MSNATNNTLGSLLPQLEAAANSNSLYGGMVPNLR). Residues Asn3 and Asn6 are each glycosylated (N-linked (GlcNAc...) asparagine). A helical membrane pass occupies residues 35-55 (FNITMIVIWGILLTIHVVQLL). Residues 56 to 57 (MR) are Cytoplasmic-facing. A helical membrane pass occupies residues 58–78 (QYWFSIAFICTGILEVLGYIG). At 79 to 90 (RTWSHSNVADMD) the chain is on the extracellular side. The chain crosses the membrane as a helical span at residues 91 to 111 (AFLLNMICLTIAPVFTMGGIY). At 112 to 135 (YQLAKLIEVYGHRFSLLPSPMAYS) the chain is on the cytoplasmic side. A helical transmembrane segment spans residues 136–156 (FIFICSDIVSLVVQAVGGGLC). Over 157–171 (GVAVTDGTSTTTGNH) the chain is Extracellular. Residues 172–192 (VFIAGLAIQVASMAIFLMLWF) traverse the membrane as a helical segment. Residues 193 to 241 (HFLFRIYISVRWEHINSRPISLSLLKISQTEVDYLYREKFHFLRLEPKR) are Cytoplasmic-facing. Residues 242 to 262 (WVFHYFNLAMTVAVLTIFTRC) form a helical membrane-spanning segment. The Extracellular segment spans residues 263 to 281 (CYRLAELVVGWDGYLITHE). Residues 282 to 302 (WYFIILDALMMAIATVTLTIF) traverse the membrane as a helical segment. Topologically, residues 303 to 382 (HPGFAFKGRS…LFSSKKKAKL (80 aa)) are cytoplasmic.

This sequence belongs to the lipid-translocating exporter (LTE) (TC 9.A.26.1) family.

The protein localises to the cell membrane. Its function is as follows. Catalyzes the ATP-dependent translocation of sphingoid long-chain bases (LCBs) from the cytoplasmic site toward the extracytoplasmic side of the membrane (flip-flop). Involved in the establishment of the functional lipid asymmetry of the plasma membrane. Regulates intracellular levels of LCBs, sphingolipid precursors that are growth inhibitory at increased levels. The polypeptide is Sphingoid long-chain base transporter RSB1 (RSB1) (Saccharomyces cerevisiae (strain Lalvin EC1118 / Prise de mousse) (Baker's yeast)).